The following is a 577-amino-acid chain: Isocitrate dehydrogenase kinase/phosphatase (577 aa).

ATP-binding positions include 315-321 (APGIRGM) and lysine 336. Residue aspartate 371 is part of the active site.

This sequence belongs to the AceK family.

It is found in the cytoplasm. The catalysed reaction is L-seryl-[isocitrate dehydrogenase] + ATP = O-phospho-L-seryl-[isocitrate dehydrogenase] + ADP + H(+). Its function is as follows. Bifunctional enzyme which can phosphorylate or dephosphorylate isocitrate dehydrogenase (IDH) on a specific serine residue. This is a regulatory mechanism which enables bacteria to bypass the Krebs cycle via the glyoxylate shunt in response to the source of carbon. When bacteria are grown on glucose, IDH is fully active and unphosphorylated, but when grown on acetate or ethanol, the activity of IDH declines drastically concomitant with its phosphorylation. The protein is Isocitrate dehydrogenase kinase/phosphatase of Escherichia fergusonii (strain ATCC 35469 / DSM 13698 / CCUG 18766 / IAM 14443 / JCM 21226 / LMG 7866 / NBRC 102419 / NCTC 12128 / CDC 0568-73).